The chain runs to 437 residues: ATP-dependent protease ATPase subunit HslU (437 aa).

Residues Val18, 60–65 (GCGKTE), Asp250, Glu315, and Arg387 each bind ATP.

This sequence belongs to the ClpX chaperone family. HslU subfamily. As to quaternary structure, a double ring-shaped homohexamer of HslV is capped on each side by a ring-shaped HslU homohexamer. The assembly of the HslU/HslV complex is dependent on binding of ATP.

Its subcellular location is the cytoplasm. Its function is as follows. ATPase subunit of a proteasome-like degradation complex; this subunit has chaperone activity. The binding of ATP and its subsequent hydrolysis by HslU are essential for unfolding of protein substrates subsequently hydrolyzed by HslV. HslU recognizes the N-terminal part of its protein substrates and unfolds these before they are guided to HslV for hydrolysis. The sequence is that of ATP-dependent protease ATPase subunit HslU from Methylobacterium nodulans (strain LMG 21967 / CNCM I-2342 / ORS 2060).